Reading from the N-terminus, the 118-residue chain is Thioredoxin H-type 2 (118 aa).

Residues 2-113 form the Thioredoxin domain; sequence AEEGQVIGVH…LQQTIAKHIS (112 aa). Residues C39 and C42 each act as nucleophile in the active site. C39 and C42 are joined by a disulfide.

This sequence belongs to the thioredoxin family. Plant H-type subfamily.

The protein localises to the cytoplasm. Functionally, participates in various redox reactions through the reversible oxidation of the active center dithiol to a disulfide. The H form is known to activate a number of cytosolic enzymes. The polypeptide is Thioredoxin H-type 2 (Nicotiana tabacum (Common tobacco)).